Reading from the N-terminus, the 463-residue chain is Serine/threonine-protein kinase sgk-1 (463 aa).

Residues 135 to 392 form the Protein kinase domain; that stretch reads FDYLTTIGKG…FRDIRDHPFF (258 aa). Residues 141–149 and Lys-164 contribute to the ATP site; that span reads IGKGSFGRV. Catalysis depends on Asp-259, which acts as the Proton acceptor. The AGC-kinase C-terminal domain occupies 393-463; the sequence is LPVDWDKLLN…TFVDTNRVLV (71 aa).

This sequence belongs to the protein kinase superfamily. AGC Ser/Thr protein kinase family. Interacts with pdk-1, akt-1, akt-2 and daf-16. Part of a complex containing sgk-1, akt-1 and akt-2. Interacts with let-92 phosphatase regulatory subunit pptr-1. Requires Mg(2+) as cofactor. Expressed in late embryos just before hatching. At postembryonic stages, expressed in sensory and motor neurons and in the intestine. Highly expressed in the intestine and head and tail neurons.

It is found in the cytoplasm. The protein localises to the nucleus. It localises to the apical cell membrane. It carries out the reaction L-seryl-[protein] + ATP = O-phospho-L-seryl-[protein] + ADP + H(+). The catalysed reaction is L-threonyl-[protein] + ATP = O-phospho-L-threonyl-[protein] + ADP + H(+). Phosphorylated and activated by pdk-1. Functionally, acts downstream of PI3 kinase age-1 and kinase pdk-1 in the daf-2/insulin receptor-like transduction pathway. Essential role in regulating development, stress response, and longevity. Phosphorylates Forkhead-related daf-16 and the longevity-promoting skn-1 transcription factors, which inhibits their entry into the nucleus and antagonizes their function. Promotes the cytoplasmic localization of the transcription factor pqm-1. Plays a role in the intracellular trafficking of proteins such as mig-14 to the cell membrane, and this may be through positively regulating ceramide synthesis. Acts downstream of rict-1 to regulate fat storage, size, development and vitellogenesis. Downstream of age-1 and together with akt-1/2, promotes cell survival during embryonic development. Plays a role in maintaining the gonadal basement membrane through antagonizing akt-1 activity. Does not appear to play a role in immune function. The protein is Serine/threonine-protein kinase sgk-1 of Caenorhabditis elegans.